Consider the following 434-residue polypeptide: ATP-dependent RNA helicase sub2 (434 aa).

The short motif at 59-87 (TGFRDFLLKGELLRAITDCGFEHPSEVQQ) is the Q motif element. The Helicase ATP-binding domain occupies 90–265 (IPTAILNVDV…KKFMRNPLEV (176 aa)). 103 to 110 (AKSGLGKT) provides a ligand contact to ATP. The DECD box motif lies at 212-215 (DECD). Residues 293–430 (KLNELLDSLE…EYPEEGVDSS (138 aa)) enclose the Helicase C-terminal domain.

This sequence belongs to the DEAD box helicase family. DECD subfamily.

The protein localises to the nucleus. It catalyses the reaction ATP + H2O = ADP + phosphate + H(+). In terms of biological role, ATP-binding RNA helicase involved in transcription elongation and required for the export of mRNA out of the nucleus. SUB2 also plays a role in pre-mRNA splicing and spliceosome assembly. May be involved in rDNA and telomeric silencing, and maintenance of genome integrity. The polypeptide is ATP-dependent RNA helicase sub2 (sub2) (Emericella nidulans (strain FGSC A4 / ATCC 38163 / CBS 112.46 / NRRL 194 / M139) (Aspergillus nidulans)).